We begin with the raw amino-acid sequence, 135 residues long: Probable disulfide formation protein (135 aa).

A helical membrane pass occupies residues 7–26 (SYCLYLAWLFSCIGTLMSVY). C36 and C39 form a disulfide bridge. The next 2 helical transmembrane spans lie at 41–60 (YQRI…AYRE) and 67–84 (YTLP…YQVC). A disulfide bridge links C96 with C101. The chain crosses the membrane as a helical span at residues 109–131 (GFITMPMASAAAFCAIACLLVLA).

The protein belongs to the DsbB family. BdbC subfamily.

It is found in the cell inner membrane. Functionally, required for disulfide bond formation in some proteins. The polypeptide is Probable disulfide formation protein (Chlamydia trachomatis serovar D (strain ATCC VR-885 / DSM 19411 / UW-3/Cx)).